The primary structure comprises 931 residues: Protein translocase subunit SecA (931 aa).

ATP-binding positions include Gln87, 105–109 (GEGKT), and Asp515. Positions 915, 917, 926, and 927 each coordinate Zn(2+).

It belongs to the SecA family. As to quaternary structure, monomer and homodimer. Part of the essential Sec protein translocation apparatus which comprises SecA, SecYEG and auxiliary proteins SecDF-YajC and YidC. Zn(2+) is required as a cofactor.

The protein localises to the cell inner membrane. It localises to the cytoplasm. It carries out the reaction ATP + H2O + cellular proteinSide 1 = ADP + phosphate + cellular proteinSide 2.. Part of the Sec protein translocase complex. Interacts with the SecYEG preprotein conducting channel. Has a central role in coupling the hydrolysis of ATP to the transfer of proteins into and across the cell membrane, serving both as a receptor for the preprotein-SecB complex and as an ATP-driven molecular motor driving the stepwise translocation of polypeptide chains across the membrane. This Burkholderia ambifaria (strain MC40-6) protein is Protein translocase subunit SecA.